The chain runs to 237 residues: GCN5-related N-acetyltransferase 3, chloroplastic (237 aa).

The transit peptide at 1 to 93 (MGLVGCVGKS…RAISRSDVIV (93 aa)) directs the protein to the chloroplast. The N-acetyltransferase domain maps to 94 to 237 (SVFCKPQHVD…TMMFTKSLEA (144 aa)). Acetyl-CoA contacts are provided by residues 171-173 (LMV), 179-184 (RMGIGK), 207-209 (FED), and phenylalanine 214.

This sequence belongs to the acetyltransferase family. GNAT subfamily. In terms of assembly, oligomer. Post-translationally, autoacetylated. As to expression, expressed in green tissues.

The protein resides in the plastid. It is found in the chloroplast. The enzyme catalyses an N-terminal L-alpha-aminoacyl-[protein] + acetyl-CoA = N-terminal N(alpha)-acetyl-L-alpha-aminoacyl-[protein] + CoA + H(+). It carries out the reaction L-lysyl-[protein] + acetyl-CoA = N(6)-acetyl-L-lysyl-[protein] + CoA + H(+). Its function is as follows. Protein acetyltransferase with dual specificity triggering both N-alpha-acetylation (NTA) and epsilon-lysine acetylation (KA), possibly with a low efficiency or toward specific plastid substrates. This chain is GCN5-related N-acetyltransferase 3, chloroplastic, found in Arabidopsis thaliana (Mouse-ear cress).